Consider the following 109-residue polypeptide: Putative pterin-4-alpha-carbinolamine dehydratase (109 aa).

It belongs to the pterin-4-alpha-carbinolamine dehydratase family.

The enzyme catalyses (4aS,6R)-4a-hydroxy-L-erythro-5,6,7,8-tetrahydrobiopterin = (6R)-L-erythro-6,7-dihydrobiopterin + H2O. The chain is Putative pterin-4-alpha-carbinolamine dehydratase from Vibrio cholerae serotype O1 (strain ATCC 39315 / El Tor Inaba N16961).